A 338-amino-acid polypeptide reads, in one-letter code: Glyceraldehyde-3-phosphate dehydrogenase, cytosolic (338 aa).

NAD(+) contacts are provided by residues 14–15 (RI), Asp-36, and Arg-83. D-glyceraldehyde 3-phosphate contacts are provided by residues 154 to 156 (SCT), Thr-185, 214 to 215 (TG), and Arg-237. Cys-155 functions as the Nucleophile in the catalytic mechanism. NAD(+) is bound at residue Asn-319.

This sequence belongs to the glyceraldehyde-3-phosphate dehydrogenase family. As to quaternary structure, homotetramer.

Its subcellular location is the cytoplasm. It carries out the reaction D-glyceraldehyde 3-phosphate + phosphate + NAD(+) = (2R)-3-phospho-glyceroyl phosphate + NADH + H(+). It functions in the pathway carbohydrate degradation; glycolysis; pyruvate from D-glyceraldehyde 3-phosphate: step 1/5. Its function is as follows. Key enzyme in glycolysis that catalyzes the first step of the pathway by converting D-glyceraldehyde 3-phosphate (G3P) into 3-phospho-D-glyceroyl phosphate. Essential for the maintenance of cellular ATP levels and carbohydrate metabolism. The polypeptide is Glyceraldehyde-3-phosphate dehydrogenase, cytosolic (GAPC) (Ranunculus acris (Meadow buttercup)).